Reading from the N-terminus, the 118-residue chain is uncharacterized protein (118 aa).

A run of 2 helical transmembrane segments spans residues 7 to 27 (VIVK…FIIE) and 34 to 58 (VFVA…AIIF).

The protein localises to the membrane. This is an uncharacterized protein from Saccharomyces cerevisiae (strain ATCC 204508 / S288c) (Baker's yeast).